A 344-amino-acid chain; its full sequence is Cathepsin B-like cysteine proteinase 5 (344 aa).

Positions methionine 1–alanine 15 are cleaved as a signal peptide. Positions valine 16 to alanine 81 are excised as a propeptide. 6 cysteine pairs are disulfide-bonded: cysteine 95–cysteine 124, cysteine 107–cysteine 154, cysteine 143–cysteine 213, cysteine 144–cysteine 150, cysteine 183–cysteine 217, and cysteine 191–cysteine 203. Cysteine 110 is an active-site residue. Residues histidine 286 and asparagine 306 contribute to the active site.

Belongs to the peptidase C1 family.

The polypeptide is Cathepsin B-like cysteine proteinase 5 (cpr-5) (Caenorhabditis elegans).